A 274-amino-acid chain; its full sequence is MAIHLYKTSTPSTRNGAVDSQVKSNTRNNLIYGQHRCSKGRNARGIITAGHRGGGHKRLYRKIDFRRNEKDIYGRIVSIEYDPNRNASICLIHYGDGEKRYILHPRGAIIGDTIVSGTEVPIKMGNALPLTDMPLGTAIHNIEITLGKGGQLARAAGAVAKLIAKEGKSATLKLPSGEVRLISKNCSATVGQVGNVEVNQKKLGRAGSKCWLGKRPVVRGVVMNPVDHPHGGGEGRAPIGRKKPATPWGYPALGRRSRKRKKYSDNLILRRRSK.

Disordered regions lie at residues 1–20 and 223–274; these read MAIHLYKTSTPSTRNGAVDS and MNPV…RRSK.

Belongs to the universal ribosomal protein uL2 family. Part of the 50S ribosomal subunit.

It localises to the plastid. It is found in the chloroplast. In Eucalyptus globulus subsp. globulus (Tasmanian blue gum), this protein is Large ribosomal subunit protein uL2cz/uL2cy (rpl2-A).